Here is a 259-residue protein sequence, read N- to C-terminus: MSIGIFDSGVGGLTVFREIDREFPFADIYYLGDTARVPYGNKSKETIIRYSLECANYLYSFGIDALIVACNTASSYAIEALRESFDIPVIGVIKPGVELAVKTTKNGRIGVIGTQATIKSGSYRTEIEKKGDFTVYQKPCPLFVPLVEEGLIDHKITELTVKEYLDDIVSKGIDTLILGCTHYPLLKDVIKKIYPHLNIIDSSKATALYLKKKNLDLNGTGERKIFITDESPSFEKLKDLVVGSDIHLEKLELSKICTL.

Substrate contacts are provided by residues 7–8 (DS) and 39–40 (YG). The active-site Proton donor/acceptor is C70. Substrate is bound at residue 71–72 (NT). C180 (proton donor/acceptor) is an active-site residue. 181–182 (TH) contributes to the substrate binding site.

This sequence belongs to the aspartate/glutamate racemases family.

The enzyme catalyses L-glutamate = D-glutamate. Its pathway is cell wall biogenesis; peptidoglycan biosynthesis. Its function is as follows. Provides the (R)-glutamate required for cell wall biosynthesis. In Persephonella marina (strain DSM 14350 / EX-H1), this protein is Glutamate racemase.